We begin with the raw amino-acid sequence, 315 residues long: Ornithine carbamoyltransferase (315 aa).

Residues 53–56, Q80, R104, and 131–134 each bind carbamoyl phosphate; these read STRT and HPCQ. L-ornithine-binding positions include N163, D227, and 231–232; that span reads SM. Residues 267-268 and R295 contribute to the carbamoyl phosphate site; that span reads CL.

The protein belongs to the aspartate/ornithine carbamoyltransferase superfamily. OTCase family.

The protein resides in the cytoplasm. It carries out the reaction carbamoyl phosphate + L-ornithine = L-citrulline + phosphate + H(+). It participates in amino-acid biosynthesis; L-arginine biosynthesis; L-arginine from L-ornithine and carbamoyl phosphate: step 1/3. Its function is as follows. Reversibly catalyzes the transfer of the carbamoyl group from carbamoyl phosphate (CP) to the N(epsilon) atom of ornithine (ORN) to produce L-citrulline. This is Ornithine carbamoyltransferase from Rhodococcus jostii (strain RHA1).